The sequence spans 670 residues: UvrABC system protein B (670 aa).

Positions 26–414 (EGLEDGLAHQ…GGDVIDQVVR (389 aa)) constitute a Helicase ATP-binding domain. 39–46 (GVTGSGKT) contacts ATP. Positions 92 to 115 (YYDYYQPEAYVPSSDTFIEKDASV) match the Beta-hairpin motif. The region spanning 431–597 (QVDDLLSEIR…GINKKISDIL (167 aa)) is the Helicase C-terminal domain. Positions 630–665 (ELKIRELESKMLTHAQNLEFEEAAALRDEVQVLRAQ) constitute a UVR domain.

The protein belongs to the UvrB family. As to quaternary structure, forms a heterotetramer with UvrA during the search for lesions. Interacts with UvrC in an incision complex.

Its subcellular location is the cytoplasm. The UvrABC repair system catalyzes the recognition and processing of DNA lesions. A damage recognition complex composed of 2 UvrA and 2 UvrB subunits scans DNA for abnormalities. Upon binding of the UvrA(2)B(2) complex to a putative damaged site, the DNA wraps around one UvrB monomer. DNA wrap is dependent on ATP binding by UvrB and probably causes local melting of the DNA helix, facilitating insertion of UvrB beta-hairpin between the DNA strands. Then UvrB probes one DNA strand for the presence of a lesion. If a lesion is found the UvrA subunits dissociate and the UvrB-DNA preincision complex is formed. This complex is subsequently bound by UvrC and the second UvrB is released. If no lesion is found, the DNA wraps around the other UvrB subunit that will check the other stand for damage. The chain is UvrABC system protein B from Pectobacterium atrosepticum (strain SCRI 1043 / ATCC BAA-672) (Erwinia carotovora subsp. atroseptica).